Here is a 29-residue protein sequence, read N- to C-terminus: Cytochrome b6-f complex subunit 8 (29 aa).

A helical membrane pass occupies residues 3 to 23 (ILTLGWVSILALFTWSIAMVV).

This sequence belongs to the PetN family. In terms of assembly, the 4 large subunits of the cytochrome b6-f complex are cytochrome b6, subunit IV (17 kDa polypeptide, PetD), cytochrome f and the Rieske protein, while the 4 small subunits are PetG, PetL, PetM and PetN. The complex functions as a dimer.

It is found in the cellular thylakoid membrane. Its function is as follows. Component of the cytochrome b6-f complex, which mediates electron transfer between photosystem II (PSII) and photosystem I (PSI), cyclic electron flow around PSI, and state transitions. The chain is Cytochrome b6-f complex subunit 8 from Microcystis aeruginosa (strain NIES-843 / IAM M-2473).